The primary structure comprises 596 residues: Protein kinase C iota type (596 aa).

Over residues 1 to 12 the composition is skewed to polar residues; it reads MPTQRDSSTMSH. The interval 1–21 is disordered; it reads MPTQRDSSTMSHTVACGGGGD. The residue at position 2 (Pro-2) is an N-acetylproline. Residues 2–28 form a required for interaction with RAB2 region; it reads PTQRDSSTMSHTVACGGGGDHSHQVRV. The regulatory domain stretch occupies residues 2–253; it reads PTQRDSSTMS…KASSSLGLQD (252 aa). The residue at position 3 (Thr-3) is a Phosphothreonine. 2 positions are modified to phosphoserine: Ser-7 and Ser-8. Position 9 is a phosphothreonine (Thr-9). The 84-residue stretch at 25 to 108 folds into the PB1 domain; sequence QVRVKAYYRG…SELLIHVFPC (84 aa). The tract at residues 72–91 is interaction with PARD6A; sequence DEEGDPCTVSSQLELEEAFR. Residues 125–134 carry the Pseudosubstrate motif; that stretch reads YRRGARRWRK. A Phorbol-ester/DAG-type zinc finger spans residues 140 to 190; sequence GHTFQAKRFNRRAHCAICTDRIWGLGRQGYKCINCKLLVHKKCHKLVTIEC. Positions 254–522 constitute a Protein kinase domain; it reads FDLLRVIGRG…FADIQGHPFF (269 aa). 260–268 lines the ATP pocket; the sequence is IGRGSYAKV. Residues Tyr-265 and Tyr-280 each carry the phosphotyrosine; by SRC modification. Lys-283 is a binding site for ATP. Tyr-334 is modified (phosphotyrosine; by SRC). The active-site Proton acceptor is the Asp-378. Thr-412 bears the Phosphothreonine; by PDPK1 mark. Positions 523-594 constitute an AGC-kinase C-terminal domain; it reads RNVDWDMMEQ…INPLLMSAEE (72 aa). Thr-564 is modified (phosphothreonine).

The protein belongs to the protein kinase superfamily. AGC Ser/Thr protein kinase family. PKC subfamily. As to quaternary structure, forms a complex with SQSTM1 and MP2K5. Interacts directly with SQSTM1. Interacts with IKBKB. Interacts with PARD6A, PARD6B and PARD6G. Part of a quaternary complex containing aPKC, PARD3, a PARD6 protein (PARD6A, PARD6B or PARD6G) and a GTPase protein (CDC42 or RAC1). Part of a complex with LLGL1 and PARD6B. Interacts with ADAP1/CENTA1. Interaction with SMG1, through the ZN-finger domain, activates the kinase activity. Interacts with CDK7. Forms a complex with RAB2A and GAPDH involved in recruitment onto the membrane of vesicular tubular clusters (VTCs). Interacts with ECT2 ('Thr-359' phosphorylated form). Interacts with VAMP2. Interacts with WDFY2 (via WD repeats 1-3). Phosphorylation at Thr-412 in the activation loop is not mandatory for activation. Upon neuronal growth factor (NGF) stimulation, phosphorylated by SRC at Tyr-265, Tyr-280 and Tyr-334. Phosphorylation at Tyr-265 facilitates binding to KPNB1/importin-beta regulating entry of PRKCI into the nucleus. Phosphorylation on Tyr-334 is important for NF-kappa-B stimulation. Phosphorylated at Thr-564 during the initial phase of long term potentiation. In terms of tissue distribution, expressed in dorsal hippocampus (at protein level).

The protein localises to the cytoplasm. Its subcellular location is the membrane. The protein resides in the endosome. It localises to the nucleus. It catalyses the reaction L-seryl-[protein] + ATP = O-phospho-L-seryl-[protein] + ADP + H(+). It carries out the reaction L-threonyl-[protein] + ATP = O-phospho-L-threonyl-[protein] + ADP + H(+). With respect to regulation, atypical PKCs (PRKCI and PRKCZ) exhibit an elevated basal enzymatic activity (that may be due to the interaction with SMG1 or SQSTM1) and are not regulated by diacylglycerol, phosphatidylserine, phorbol esters or calcium ions. Two specific sites, Thr-412 (activation loop of the kinase domain) and Thr-564 (turn motif), need to be phosphorylated for its full activation. Might also be a target for novel lipid activators that are elevated during nutrient-stimulated insulin secretion. Functionally, calcium- and diacylglycerol-independent serine/ threonine-protein kinase that plays a general protective role against apoptotic stimuli, is involved in NF-kappa-B activation, cell survival, differentiation and polarity, and contributes to the regulation of microtubule dynamics in the early secretory pathway. Is necessary for BCR-ABL oncogene-mediated resistance to apoptotic drug in leukemia cells, protecting leukemia cells against drug-induced apoptosis. In cultured neurons, prevents amyloid beta protein-induced apoptosis by interrupting cell death process at a very early step. In glioblastoma cells, may function downstream of phosphatidylinositol 3-kinase (PI3K) and PDPK1 in the promotion of cell survival by phosphorylating and inhibiting the pro-apoptotic factor BAD. Can form a protein complex in non-small cell lung cancer (NSCLC) cells with PARD6A and ECT2 and regulate ECT2 oncogenic activity by phosphorylation, which in turn promotes transformed growth and invasion. In response to nerve growth factor (NGF), acts downstream of SRC to phosphorylate and activate IRAK1, allowing the subsequent activation of NF-kappa-B and neuronal cell survival. Functions in the organization of the apical domain in epithelial cells by phosphorylating EZR. This step is crucial for activation and normal distribution of EZR at the early stages of intestinal epithelial cell differentiation. Forms a protein complex with LLGL1 and PARD6B independently of PARD3 to regulate epithelial cell polarity. Plays a role in microtubule dynamics in the early secretory pathway through interaction with RAB2A and GAPDH and recruitment to vesicular tubular clusters (VTCs). In human coronary artery endothelial cells (HCAEC), is activated by saturated fatty acids and mediates lipid-induced apoptosis. Downstream of PI3K is required for insulin-stimulated glucose transport. Activates RAB4A and promotes its association with KIF3A which is required for the insulin-induced SLC2A4/GLUT4 translocation in adipocytes. Is essential in early embryogenesis and development of differentiating photoreceptors by playing a role in the establishment of epithelial and neuronal polarity. Involved in early synaptic long term potentiation phase in CA1 hippocampal cells and short term memory formation. The sequence is that of Protein kinase C iota type (Prkci) from Rattus norvegicus (Rat).